We begin with the raw amino-acid sequence, 404 residues long: MKNPIYLDYAATTPVEFKVAKKMMNYLTIDGIFGNPASRSHKFGWEAEEVIDIARNEISELIGSDSREIVFTSGATEANNLAIKGIAFFHRKKGNHIITSKTEHKSVLDACRYLESVGFSVTYLTPKNNGIIDLNDLKKNINKNTILVSIMHVNNETGIIQDITNISKICRSHDIFFHVDATQSVGKIAINLKNLFVDLMSFSAHKIYGPKGIGGLYVRRKPRVRLSALSHGGGHERGMRAGTLPVHQIVGMGESFKLARKKINDDFIHLTNLRNDLWNGIKNIEEVYLNSDLKQGAPHILNVSFNYIEGESLIMALKDLAISSGSACTSSSLEPSYVLRALGIKDELAHSSIRFSIGRFTTKEEIQHTVKSVHKSIHRLRALSPLWEMFKSGVDLNSIEWDHT.

Residues 75 to 76, asparagine 155, glutamine 183, and 203 to 205 contribute to the pyridoxal 5'-phosphate site; these read AT and SAH. Residue lysine 206 is modified to N6-(pyridoxal phosphate)lysine. Residue threonine 243 participates in pyridoxal 5'-phosphate binding. Residue cysteine 328 is the Cysteine persulfide intermediate of the active site. Cysteine 328 contacts [2Fe-2S] cluster.

Belongs to the class-V pyridoxal-phosphate-dependent aminotransferase family. NifS/IscS subfamily. As to quaternary structure, homodimer. Forms a heterotetramer with IscU, interacts with other sulfur acceptors. The cofactor is pyridoxal 5'-phosphate.

It is found in the cytoplasm. The enzyme catalyses (sulfur carrier)-H + L-cysteine = (sulfur carrier)-SH + L-alanine. It functions in the pathway cofactor biosynthesis; iron-sulfur cluster biosynthesis. Its function is as follows. Master enzyme that delivers sulfur to a number of partners involved in Fe-S cluster assembly, tRNA modification or cofactor biosynthesis. Catalyzes the removal of elemental sulfur atoms from cysteine to produce alanine. Functions as a sulfur delivery protein for Fe-S cluster synthesis onto IscU, an Fe-S scaffold assembly protein, as well as other S acceptor proteins. The protein is Cysteine desulfurase IscS of Buchnera aphidicola subsp. Schizaphis graminum (strain Sg).